The primary structure comprises 483 residues: Xylulose kinase (483 aa).

Position 77 to 78 (methionine 77 to histidine 78) interacts with substrate. Aspartate 233 (proton acceptor) is an active-site residue.

This sequence belongs to the FGGY kinase family.

It catalyses the reaction D-xylulose + ATP = D-xylulose 5-phosphate + ADP + H(+). Functionally, catalyzes the phosphorylation of D-xylulose to D-xylulose 5-phosphate. This Klebsiella pneumoniae protein is Xylulose kinase.